A 357-amino-acid chain; its full sequence is Alanine racemase (357 aa).

Residue K34 is the Proton acceptor; specific for D-alanine of the active site. An N6-(pyridoxal phosphate)lysine modification is found at K34. Substrate is bound at residue R130. The active-site Proton acceptor; specific for L-alanine is Y253. Substrate is bound at residue M301.

It belongs to the alanine racemase family. The cofactor is pyridoxal 5'-phosphate.

It catalyses the reaction L-alanine = D-alanine. The protein operates within amino-acid biosynthesis; D-alanine biosynthesis; D-alanine from L-alanine: step 1/1. Functionally, catalyzes the interconversion of L-alanine and D-alanine. May also act on other amino acids. The sequence is that of Alanine racemase (alr) from Mannheimia succiniciproducens (strain KCTC 0769BP / MBEL55E).